The primary structure comprises 129 residues: uncharacterized protein (129 aa).

Residues Ser-34–Val-57 form a disordered region.

This is an uncharacterized protein from Homo sapiens (Human).